A 315-amino-acid chain; its full sequence is WD repeat domain-containing protein 83 (315 aa).

WD repeat units follow at residues 23-62, 65-104, 107-146, 151-188, 190-228, 231-272, and 275-313; these read CGQGAVRAVRFNVDGNYCLTCGSDKTLKLWNPLRGTLLRT, GHGYEVLDAAGSFDNSHLCSGGGDKTVVLWDVATGQVVRK, GHAGKVNTVQFNEEATVILSGSIDSSVRCWDCRSRKPEPV, EARDGISSVKVSDHEILAGSVDGRVRRYDLRMGQVTSD, VGSPITCTCFSRDGQCTLISSLDSTLRLLDKDTGELLGE, GHKN…LALA, and VGSNVVQSLAYHPADPCLLTAMGGSIQYWREETYEAEGG.

The protein belongs to the WD repeat MORG1 family. Interacts with EGLN3/PHD3. Interacts with ERK signaling proteins MAP2K1/MEK1, MAP2K2/MEK2, LAMTOR3, ARAF/Raf-1, MAPK1/ERK2 and MAPK3/ERK1. Identified in the spliceosome C complex. Interacts with PARD6B and CRB3. Interacts strongly with GTP-bound RRAGA but not with inactive GDP-bound. Interacts with p62/SQSTM1. As to expression, highly expressed in testis and brain. Expressed at intermediate level in heart, liver and kidney. Weakly expressed in spleen and lung and absent in muscle.

It is found in the cytoplasm. The protein localises to the lysosome. It localises to the nucleus. Functionally, molecular scaffold protein for various multimeric protein complexes. Acts as a module in the assembly of a multicomponent scaffold for the ERK pathway, linking ERK responses to specific agonists. At low concentrations it enhances ERK activation, whereas high concentrations lead to the inhibition of ERK activation. Also involved in response to hypoxia by acting as a negative regulator of HIF1A/HIF-1-alpha via its interaction with EGLN3/PHD3. May promote degradation of HIF1A. May act by recruiting signaling complexes to a specific upstream activator. May also be involved in pre-mRNA splicing. Participates in tight junction development by regulating apico-basal polarity, a key step in tissue development and organization. Mechanistically, regulates the translocation of PAR6-aPKC from the cytoplasm to the apical surface by acting as an adapter between PARD6B AND CRB3. Also acts as a negative regulator of mTORC1 under nutrient-rich conditions by binding to the active Rag GTPases to inhibit mTORC1 localization to the lysosome and phosphorylation of downstream targets. This facilitates constitutive basal autophagy during nutrient availability. The polypeptide is WD repeat domain-containing protein 83 (Wdr83) (Rattus norvegicus (Rat)).